Reading from the N-terminus, the 171-residue chain is Cyclin-dependent kinase inhibitor 2A (171 aa).

The segment covering 33–42 (ASMHTKHESE) has biased composition (basic and acidic residues). Residues 33–52 (ASMHTKHESEESFSGEKLTE) are disordered. 3 ANK repeats span residues 45–74 (FSGE…NPNA), 78–106 (FGRS…EPNT), and 111–140 (TLTL…RLDV).

Belongs to the CDKN2 cyclin-dependent kinase inhibitor family. In terms of assembly, heterodimer with CDK4 or CDK6. Predominamt P16 complexes contained CDK6. Interacts with CDK4 (both 'T-172'-phosphorylated and non-phosphorylated forms); the interaction inhibits cyclin D-CDK4 kinase activity. Interacts with ISCO2. In terms of tissue distribution, expressed predominantly in lung and testis. In the testis, restricted to germ cells in the seminiferous epithelium. Not detected in premeiotic spermatogonia but high levels found in postmeiotic spermatids. In primary tumors, low levels detected in melanocytic hyperplasias. Higher levels found in non-metastatic and metastatic melanomas.

Its subcellular location is the cytoplasm. The protein localises to the nucleus. In terms of biological role, acts as a negative regulator of the proliferation of normal cells by interacting strongly with CDK4 and CDK6. This inhibits their ability to interact with cyclins D and to phosphorylate the retinoblastoma protein. This Monodelphis domestica (Gray short-tailed opossum) protein is Cyclin-dependent kinase inhibitor 2A.